A 477-amino-acid polypeptide reads, in one-letter code: Putative 4-(hydroxymethyl)benzenesulfonate dehydrogenase TsaD2 (477 aa).

Residues 154–155 (WN), 178–181 (KAAE), and 230–231 (GS) each bind NAD(+). Catalysis depends on glutamate 252, which acts as the Proton acceptor. Leucine 253 provides a ligand contact to NAD(+). Catalysis depends on cysteine 286, which acts as the Nucleophile. Glutamate 381 is an NAD(+) binding site.

This sequence belongs to the aldehyde dehydrogenase family. Homodimer.

The enzyme catalyses 4-(hydroxymethyl)benzenesulfonate + NAD(+) = 4-formylbenzenesulfonate + NADH + H(+). In terms of biological role, involved in the toluene-4-sulfonate degradation pathway. Does not discriminate between the sulfonate and the carboxyl substituents and can also be involved in the p-toluenecarboxylate degradation pathway. In Comamonas testosteroni (Pseudomonas testosteroni), this protein is Putative 4-(hydroxymethyl)benzenesulfonate dehydrogenase TsaD2 (tsaD2).